A 625-amino-acid chain; its full sequence is Keratin, type II cytoskeletal 1 (625 aa).

Residues 1 to 12 show a composition bias toward low complexity; the sequence is MSFQCSSRSLCR. The disordered stretch occupies residues 1 to 27; that stretch reads MSFQCSSRSLCRSGGGGGGRNFSSGSA. Residues 1-178 form a head region; it reads MSFQCSSRSL…DPQIQKVKSQ (178 aa). Residue Arg12 is modified to Omega-N-methylarginine. Residues Ser23 and Ser26 each carry the phosphoserine modification. Arg51 is modified (omega-N-methylarginine). Ser69 is modified (phosphoserine). Residues 171–319 adopt a coiled-coil conformation; sequence QIQKVKSQER…DIDFFSTLYQ (149 aa). Positions 179–214 are coil 1A; it reads EREQIKSLNDKFASFIDKVRFLEQQNQVLQTKWELL. One can recognise an IF rod domain in the interval 179–492; that stretch reads EREQIKSLND…KLLEGEEIRM (314 aa). Residues 215-233 form a linker 1 region; the sequence is QQVDTSTRTQNLDPFFESY. The coil 1B stretch occupies residues 234 to 325; it reads ISNLRRQVDS…TLYQMELSQM (92 aa). Lys275 bears the N6,N6-dimethyllysine mark. The linker 12 stretch occupies residues 326 to 349; that stretch reads QTQISETNVVLSMDNNRTLDLDGI. A coil 2 region spans residues 350–488; the sequence is IAEVKAQYDS…ATYRKLLEGE (139 aa). Residues 388-475 are a coiled coil; the sequence is DSVKNTKMEI…ELMNTKLALD (88 aa). The segment at 489–625 is tail; sequence EIRMSGECTP…VSTTYSRGTN (137 aa). Disordered stretches follow at residues 496 to 525 and 560 to 625; these read CTPN…YGSG and SGGG…RGTN. Residues 500–515 show a composition bias toward low complexity; that stretch reads VSVSVSTSHTSMSGTS. 2 stretches are compositionally biased toward gly residues: residues 516–525 and 560–606; these read SRGGGRYGSG and SGGG…GGVK. Arg517, Arg574, and Arg596 each carry omega-N-methylarginine. Residues 613–625 are compositionally biased toward polar residues; it reads VKFVSTTYSRGTN.

This sequence belongs to the intermediate filament family. In terms of assembly, heterotetramer of two type I and two type II keratins. Heterodimer with KRT10. Two heterodimers of KRT1 and KRT10 form a heterotetramer. Forms a heterodimer with KRT14; the interaction is more abundant in the absence of KRT5. Interacts with ITGB1 in the presence of RACK1 and SRC, and with RACK1. Interacts with C1QBP; the association represents a cell surface kininogen receptor. Interacts with EPPK1; interaction is dependent of higher-order structure of intermediate filament. In terms of processing, undergoes deimination of some arginine residues (citrullination).

Its subcellular location is the cell membrane. The protein resides in the cytoplasm. In terms of biological role, may regulate the activity of kinases such as PKC and SRC via binding to integrin beta-1 (ITB1) and the receptor of activated protein C kinase 1 (RACK1). In complex with C1QBP is a high affinity receptor for kininogen-1/HMWK. In Rattus norvegicus (Rat), this protein is Keratin, type II cytoskeletal 1.